Consider the following 320-residue polypeptide: Biotin synthase (320 aa).

Residues 43–270 (GAVQKSQLLS…KSWVRLSAGR (228 aa)) enclose the Radical SAM core domain. [4Fe-4S] cluster contacts are provided by Cys-58, Cys-62, and Cys-65. Cys-102, Cys-133, Cys-193, and Arg-265 together coordinate [2Fe-2S] cluster.

The protein belongs to the radical SAM superfamily. Biotin synthase family. In terms of assembly, homodimer. It depends on [4Fe-4S] cluster as a cofactor. The cofactor is [2Fe-2S] cluster.

It catalyses the reaction (4R,5S)-dethiobiotin + (sulfur carrier)-SH + 2 reduced [2Fe-2S]-[ferredoxin] + 2 S-adenosyl-L-methionine = (sulfur carrier)-H + biotin + 2 5'-deoxyadenosine + 2 L-methionine + 2 oxidized [2Fe-2S]-[ferredoxin]. It participates in cofactor biosynthesis; biotin biosynthesis; biotin from 7,8-diaminononanoate: step 2/2. Catalyzes the conversion of dethiobiotin (DTB) to biotin by the insertion of a sulfur atom into dethiobiotin via a radical-based mechanism. This is Biotin synthase from Hyphomonas neptunium (strain ATCC 15444).